A 267-amino-acid chain; its full sequence is Integral membrane protein 2C (267 aa).

Threonine 37 bears the Phosphothreonine mark. A helical; Signal-anchor for type II membrane protein membrane pass occupies residues 55–75 (VGGVCYLSMGMVVLLMGLVFA). The BRICHOS domain maps to 136–230 (FGGGDPADII…LCNGKDTYRL (95 aa)). A disulfide bridge connects residues cysteine 163 and cysteine 222. The N-linked (GlcNAc...) asparagine glycan is linked to asparagine 169.

This sequence belongs to the ITM2 family. Interacts with BACE1. Interacts with APP. Interacts with STMN2. Type I membrane-bound, as well as soluble, furin has a pre-eminent role in ITM2C proteolytic processing. PCSK7 and PCSK5 may also be involved although to a lesser extent. The soluble form of PCSK7 is incapable of processing ITM2C. Fails to undergo shedding by ADAM10 and intramembrane cleavage by SPPL2B.

It localises to the lysosome membrane. The protein resides in the cell membrane. Negative regulator of amyloid-beta peptide production. May inhibit the processing of APP by blocking its access to alpha- and beta-secretase. Binding to the beta-secretase-cleaved APP C-terminal fragment is negligible, suggesting that ITM2C is a poor gamma-secretase cleavage inhibitor. May play a role in TNF-induced cell death and neuronal differentiation. This is Integral membrane protein 2C (ITM2C) from Pongo abelii (Sumatran orangutan).